A 293-amino-acid chain; its full sequence is Phosphatidylserine decarboxylase proenzyme (293 aa).

Active-site charge relay system; for autoendoproteolytic cleavage activity residues include aspartate 88, histidine 144, and serine 247. Serine 247 (schiff-base intermediate with substrate; via pyruvic acid; for decarboxylase activity) is an active-site residue. Serine 247 is subject to Pyruvic acid (Ser); by autocatalysis.

This sequence belongs to the phosphatidylserine decarboxylase family. PSD-B subfamily. Prokaryotic type I sub-subfamily. In terms of assembly, heterodimer of a large membrane-associated beta subunit and a small pyruvoyl-containing alpha subunit. The cofactor is pyruvate. In terms of processing, is synthesized initially as an inactive proenzyme. Formation of the active enzyme involves a self-maturation process in which the active site pyruvoyl group is generated from an internal serine residue via an autocatalytic post-translational modification. Two non-identical subunits are generated from the proenzyme in this reaction, and the pyruvate is formed at the N-terminus of the alpha chain, which is derived from the carboxyl end of the proenzyme. The autoendoproteolytic cleavage occurs by a canonical serine protease mechanism, in which the side chain hydroxyl group of the serine supplies its oxygen atom to form the C-terminus of the beta chain, while the remainder of the serine residue undergoes an oxidative deamination to produce ammonia and the pyruvoyl prosthetic group on the alpha chain. During this reaction, the Ser that is part of the protease active site of the proenzyme becomes the pyruvoyl prosthetic group, which constitutes an essential element of the active site of the mature decarboxylase.

The protein resides in the cell membrane. The catalysed reaction is a 1,2-diacyl-sn-glycero-3-phospho-L-serine + H(+) = a 1,2-diacyl-sn-glycero-3-phosphoethanolamine + CO2. The protein operates within phospholipid metabolism; phosphatidylethanolamine biosynthesis; phosphatidylethanolamine from CDP-diacylglycerol: step 2/2. Catalyzes the formation of phosphatidylethanolamine (PtdEtn) from phosphatidylserine (PtdSer). The chain is Phosphatidylserine decarboxylase proenzyme from Xylella fastidiosa (strain 9a5c).